The sequence spans 305 residues: UDP-3-O-acyl-N-acetylglucosamine deacetylase (305 aa).

3 residues coordinate Zn(2+): H77, H234, and D238. The active-site Proton donor is the H261.

The protein belongs to the LpxC family. Zn(2+) serves as cofactor.

It carries out the reaction a UDP-3-O-[(3R)-3-hydroxyacyl]-N-acetyl-alpha-D-glucosamine + H2O = a UDP-3-O-[(3R)-3-hydroxyacyl]-alpha-D-glucosamine + acetate. Its pathway is glycolipid biosynthesis; lipid IV(A) biosynthesis; lipid IV(A) from (3R)-3-hydroxytetradecanoyl-[acyl-carrier-protein] and UDP-N-acetyl-alpha-D-glucosamine: step 2/6. Catalyzes the hydrolysis of UDP-3-O-myristoyl-N-acetylglucosamine to form UDP-3-O-myristoylglucosamine and acetate, the committed step in lipid A biosynthesis. This is UDP-3-O-acyl-N-acetylglucosamine deacetylase from Oleidesulfovibrio alaskensis (strain ATCC BAA-1058 / DSM 17464 / G20) (Desulfovibrio alaskensis).